The sequence spans 335 residues: Nucleoid-associated protein Pput_1012 (335 aa).

The protein belongs to the YejK family.

It localises to the cytoplasm. It is found in the nucleoid. The chain is Nucleoid-associated protein Pput_1012 from Pseudomonas putida (strain ATCC 700007 / DSM 6899 / JCM 31910 / BCRC 17059 / LMG 24140 / F1).